The sequence spans 189 residues: Putative manganese efflux pump MntP (189 aa).

6 helical membrane passes run 6–26 (IFGI…AAGV), 39–59 (LAWH…YAGL), 71–91 (WIAF…SFDA), 106–126 (LVLL…SLSV), 131–151 (VWMP…GGLM), and 169–189 (VGAG…GVFY).

It belongs to the MntP (TC 9.B.29) family.

It is found in the cell inner membrane. Its function is as follows. Probably functions as a manganese efflux pump. In Desulfosudis oleivorans (strain DSM 6200 / JCM 39069 / Hxd3) (Desulfococcus oleovorans), this protein is Putative manganese efflux pump MntP.